A 365-amino-acid chain; its full sequence is S-adenosylmethionine:tRNA ribosyltransferase-isomerase (365 aa).

The protein belongs to the QueA family. As to quaternary structure, monomer.

It localises to the cytoplasm. It catalyses the reaction 7-aminomethyl-7-carbaguanosine(34) in tRNA + S-adenosyl-L-methionine = epoxyqueuosine(34) in tRNA + adenine + L-methionine + 2 H(+). It participates in tRNA modification; tRNA-queuosine biosynthesis. Functionally, transfers and isomerizes the ribose moiety from AdoMet to the 7-aminomethyl group of 7-deazaguanine (preQ1-tRNA) to give epoxyqueuosine (oQ-tRNA). This is S-adenosylmethionine:tRNA ribosyltransferase-isomerase from Rickettsia conorii (strain ATCC VR-613 / Malish 7).